The sequence spans 475 residues: Mitochondrial adenyl nucleotide antiporter SLC25A24 (475 aa).

Positions 1–173 (MLRWLRGFVL…RFWKHSTGID (173 aa)) are regulatory N-terminal domain. The Mitochondrial intermembrane segment spans residues 1–197 (MLRWLRGFVL…ERKSGQWWRQ (197 aa)). 4 EF-hand domains span residues 19-54 (EPPTRYETLFQALDRNGDGVVDIRELQEGLKSLGIP), 55-88 (LGQDAEEKIFTTGDVNKDGKLDFEEFMKYLKDHE), 86-121 (DHEKKMKLAFKSLDKNNDGKIEASEIVQSLQTLGLT), and 122-157 (ISEQQAELILQSIDADGTMTVDWNEWRDYFLFNPVA). Aspartate 32, asparagine 34, aspartate 36, valine 38, glutamate 43, aspartate 68, asparagine 70, aspartate 72, lysine 74, glutamate 79, aspartate 99, asparagine 101, aspartate 103, lysine 105, glutamate 110, aspartate 135, aspartate 137, threonine 139, threonine 141, and glutamate 146 together coordinate Ca(2+). Residues 159–168 (IEEIIRFWKH) are linker region. Residues 174 to 475 (IGDSLTIPDE…MKQTLGVTQK (302 aa)) form a C-terminal transmembrane transporter domain region. 3 Solcar repeats span residues 192–276 (GQWW…YKKL), 284–369 (IGTF…LKSH), and 381–469 (PGVL…MKQT). Residues 198-215 (LLAGGIAGAVSRTSTAPL) form a helical membrane-spanning segment. The Mitochondrial matrix segment spans residues 216–250 (DRLKVMMQVHGSKSMNIFGGFRQMIKEGGVRSLWR). The chain crosses the membrane as a helical span at residues 251–270 (GNGTNVIKIAPETAVKFWVY). At 271–293 (EQYKKLLTEEGQKIGTFERFISG) the chain is on the mitochondrial intermembrane side. The chain crosses the membrane as a helical span at residues 294–307 (SMAGATAQTFIYPM). The Mitochondrial matrix portion of the chain corresponds to 308–343 (EVMKTRLAVGKTGQYSGIYDCAKKILKYEGFGAFYK). Lysine 318 carries the post-translational modification N6-acetyllysine; alternate. At lysine 318 the chain carries N6-succinyllysine; alternate. At lysine 334 the chain carries N6-acetyllysine. The helical transmembrane segment at 344 to 363 (GYVPNLLGIIPYAGIDLAVY) threads the bilayer. At 364-386 (ELLKSHWLDNFAKDSVNPGVLVL) the chain is on the mitochondrial intermembrane side. Residues 387-404 (LGCGALSSTCGQLASYPL) traverse the membrane as a helical segment. Residues 405-443 (ALVRTRMQAQAMLEGAPQLNMVGLFRRIISKEGLPGLYR) lie on the Mitochondrial matrix side of the membrane. Lysine 435 bears the N6-acetyllysine; alternate mark. Lysine 435 bears the N6-succinyllysine; alternate mark. A helical transmembrane segment spans residues 444-463 (GITPNFMKVLPAVGISYVVY). The Mitochondrial intermembrane segment spans residues 464–475 (ENMKQTLGVTQK).

It belongs to the mitochondrial carrier (TC 2.A.29) family. As to quaternary structure, monomer. In terms of tissue distribution, mainly expressed in colon. Also expressed in the small intestine proximal to the ileum. Weakly expressed in kidney but not in the liver.

It localises to the mitochondrion inner membrane. The protein resides in the peroxisome membrane. It carries out the reaction Mg(2+)(out) + phosphate(in) + ATP(out) = Mg(2+)(in) + phosphate(out) + ATP(in). The enzyme catalyses ADP(out) + phosphate(in) + H(+)(out) = ADP(in) + phosphate(out) + H(+)(in). It catalyses the reaction AMP(out) + phosphate(in) = AMP(in) + phosphate(out). The catalysed reaction is phosphate(in) + ATP(out) + 2 H(+)(out) = phosphate(out) + ATP(in) + 2 H(+)(in). It carries out the reaction dADP(in) + ADP(out) = dADP(out) + ADP(in). The enzyme catalyses Mg(2+)(in) + ADP(out) + ATP(in) + H(+)(out) = Mg(2+)(out) + ADP(in) + ATP(out) + H(+)(in). It catalyses the reaction ADP(out) + diphosphate(in) = ADP(in) + diphosphate(out). The catalysed reaction is dAMP(in) + ADP(out) + H(+)(out) = dAMP(out) + ADP(in) + H(+)(in). It carries out the reaction 3'-AMP(in) + ADP(out) + H(+)(out) = 3'-AMP(out) + ADP(in) + H(+)(in). The enzyme catalyses dAMP(out) + phosphate(in) = dAMP(in) + phosphate(out). It catalyses the reaction 3'-AMP(out) + phosphate(in) = 3'-AMP(in) + phosphate(out). The catalysed reaction is dADP(out) + phosphate(in) + H(+)(out) = dADP(in) + phosphate(out) + H(+)(in). With respect to regulation, activated by an increase in cytosolic calcium levels that induce a conformational change of the N-terminal regulatory domain, uncapping the channel and allowing transport. Inhibited by bathophenanthroline, mersalyl, p-hydroxymercuribenzoate, bromcresol purple and tannic acid. Functionally, electroneutral antiporter that mediates the transport of adenyl nucleotides through the inner mitochondrial membrane. Originally identified as an ATP-magnesium/inorganic phosphate antiporter, it also acts as a broad specificity adenyl nucleotide antiporter. By regulating the mitochondrial matrix adenyl nucleotide pool could adapt to changing cellular energetic demands and indirectly regulate adenyl nucleotide-dependent metabolic pathways. In vitro, a low activity is also observed with guanyl and pyrimidine nucleotides. May play a role in protecting cells against oxidative stress-induced cell death, by buffering calcium levels in the mitochondrial matrix through the formation of calcium-phosphate precipitates. In Oryctolagus cuniculus (Rabbit), this protein is Mitochondrial adenyl nucleotide antiporter SLC25A24 (SLC25A24).